Consider the following 346-residue polypeptide: Upstream stimulatory factor 2 (346 aa).

Disordered stretches follow at residues 1 to 44 and 215 to 244; these read MDML…PGAE and APRT…NEVE. The span at 11–20 shows a compositional bias: low complexity; that stretch reads ASSATAAAAA. Positions 226–244 are enriched in basic and acidic residues; sequence DGTRTPRDERRRAQHNEVE. The bHLH domain maps to 235-290; that stretch reads RRRAQHNEVERRRRDKINNWIVQLSKIIPDCHADNSKTGASKGGILSKACDYIREL. A leucine-zipper region spans residues 307–328; it reads LQMDNELLRQQIEELKNENALL.

Efficient DNA binding requires dimerization with another bHLH protein. Binds DNA as a homodimer or a heterodimer (USF1/USF2). Interacts with MAF.

It localises to the nucleus. Functionally, transcription factor that binds to a symmetrical DNA sequence (E-boxes) (5'-CACGTG-3') that is found in a variety of viral and cellular promoters. This is Upstream stimulatory factor 2 (Usf2) from Mus musculus (Mouse).